Here is a 668-residue protein sequence, read N- to C-terminus: DNA ligase (668 aa).

NAD(+) contacts are provided by residues 37-41, 86-87, and Glu-116; these read DNVYD and SM. The N6-AMP-lysine intermediate role is filled by Lys-118. NAD(+) contacts are provided by Arg-139, Glu-173, Lys-288, and Lys-312. Cys-406, Cys-409, Cys-424, and Cys-429 together coordinate Zn(2+). Positions 591-668 constitute a BRCT domain; it reads IPDNPFKDKT…TEEEAIAQIK (78 aa).

This sequence belongs to the NAD-dependent DNA ligase family. LigA subfamily. Mg(2+) serves as cofactor. Requires Mn(2+) as cofactor.

It catalyses the reaction NAD(+) + (deoxyribonucleotide)n-3'-hydroxyl + 5'-phospho-(deoxyribonucleotide)m = (deoxyribonucleotide)n+m + AMP + beta-nicotinamide D-nucleotide.. Functionally, DNA ligase that catalyzes the formation of phosphodiester linkages between 5'-phosphoryl and 3'-hydroxyl groups in double-stranded DNA using NAD as a coenzyme and as the energy source for the reaction. It is essential for DNA replication and repair of damaged DNA. The chain is DNA ligase from Lactobacillus acidophilus (strain ATCC 700396 / NCK56 / N2 / NCFM).